A 440-amino-acid chain; its full sequence is Thymidine phosphorylase (440 aa).

The protein belongs to the thymidine/pyrimidine-nucleoside phosphorylase family. As to quaternary structure, homodimer.

It catalyses the reaction thymidine + phosphate = 2-deoxy-alpha-D-ribose 1-phosphate + thymine. The protein operates within pyrimidine metabolism; dTMP biosynthesis via salvage pathway; dTMP from thymine: step 1/2. Functionally, the enzymes which catalyze the reversible phosphorolysis of pyrimidine nucleosides are involved in the degradation of these compounds and in their utilization as carbon and energy sources, or in the rescue of pyrimidine bases for nucleotide synthesis. In Serratia proteamaculans (strain 568), this protein is Thymidine phosphorylase.